The chain runs to 126 residues: Putative esterase ComA2 (126 aa).

This sequence belongs to the thioesterase PaaI family.

In terms of biological role, is not required for competence. This is Putative esterase ComA2 (yuxO) from Bacillus subtilis (strain 168).